The sequence spans 452 residues: MQVKETVADGLKREFEVNVPAADIDAQVDARLVDLKDKVKLNGFRPGKVPVSHLKRVYGRSVAAETIDKLVRETNDGIFAERGFRLATEPKITMPQDQKVVEDILAGKSDLNYTVAIEVVPTIELADFKSFSVEKPVVEVSDSDVDDAIKRIAEANRAYADKAEGAKAESGDRVTISFKGSIEGVPFDGGTGEDIPVVIGSNSFIPGFEDQLIGIAVGETRTIKVTFPTNYASETLAGKPAEFETTATKVEAPQDTTIDDEFAKTLGMESLDKLKEAAKARLAAEYAGATRLRVKRQLLDRLDETHKFDAPPSLVEQEFAVMWQSINAEMQQNGKSFADEDTTEEAAREEYRKIADRRVRLGLVLSEIGEKNKIQVTDDEVSRAVIERARQMPGREKEVWDFYRSNAEALAQLRAPIYEDKVVDFILELATVTEKPVTREELYKDDDDKTAA.

In terms of domain architecture, PPIase FKBP-type spans 171–256 (GDRVTISFKG…ATKVEAPQDT (86 aa)).

Belongs to the FKBP-type PPIase family. Tig subfamily.

It is found in the cytoplasm. It catalyses the reaction [protein]-peptidylproline (omega=180) = [protein]-peptidylproline (omega=0). Its function is as follows. Involved in protein export. Acts as a chaperone by maintaining the newly synthesized protein in an open conformation. Functions as a peptidyl-prolyl cis-trans isomerase. This is Trigger factor from Rhodopseudomonas palustris (strain HaA2).